A 928-amino-acid polypeptide reads, in one-letter code: cGMP-dependent 3',5'-cyclic phosphodiesterase (928 aa).

The residue at position 109 (serine 109) is a Phosphoserine. The tract at residues 188–210 is disordered; the sequence is RRPEAVQNTSADPSEDQKDEKGY. GAF domains lie at 228–365 and 397–536; these read DATS…GTVL and DVSV…GISI. Positions 419, 434, 453, 476, and 487 each coordinate 3',5'-cyclic GMP. Residues 566–890 enclose the PDEase domain; that stretch reads SDDEYTKLLH…EHWTKVSHKF (325 aa). Residue histidine 644 is the Proton donor of the active site. Residues histidine 648, histidine 684, aspartate 685, and aspartate 796 each coordinate Zn(2+). Aspartate 685 provides a ligand contact to Mg(2+).

Belongs to the cyclic nucleotide phosphodiesterase family. PDE2 subfamily. As to quaternary structure, homodimer. It depends on Zn(2+) as a cofactor. Mg(2+) serves as cofactor. Expressed in brain and liver.

It localises to the cell membrane. Its subcellular location is the cytoplasm. It is found in the mitochondrion matrix. The protein localises to the mitochondrion inner membrane. The protein resides in the mitochondrion outer membrane. The enzyme catalyses a nucleoside 3',5'-cyclic phosphate + H2O = a nucleoside 5'-phosphate + H(+). It catalyses the reaction 3',5'-cyclic GMP + H2O = GMP + H(+). It carries out the reaction 3',5'-cyclic AMP + H2O = AMP + H(+). The 3',5'-cyclic-AMP phosphodiesterase activity is stimulated by 3',5'-cyclic GMP. Specifically inhibited by Bay 60-7550. When repressed, protected from ionomycin- but not staurosporin-induced cell death. In terms of biological role, cGMP-activated cyclic nucleotide phosphodiesterase with a dual-specificity for the second messengers cAMP and cGMP, which are key regulators of many important physiological processes. Has a higher efficiency with cGMP compared to cAMP. Plays a role in cell growth and migration. Regulates mitochondrial cAMP levels and respiration. Involved in the regulation of mitochondria morphology/dynamics and apoptotic cell death via local modulation of cAMP/PKA signaling in the mitochondrion, including the monitoring of local cAMP levels at the outer mitochondrial membrane and of PKA-dependent phosphorylation of Dnm1l. This Rattus norvegicus (Rat) protein is cGMP-dependent 3',5'-cyclic phosphodiesterase.